A 572-amino-acid polypeptide reads, in one-letter code: Methionine--tRNA ligase (572 aa).

The short motif at 11–21 (PYVNHVPHLGT) is the 'HIGH' region element. Zn(2+) is bound by residues Cys143, Cys146, Cys156, and Cys159. The 'KMSKS' region signature appears at 334–338 (QFSKS). Position 337 (Lys337) interacts with ATP.

Belongs to the class-I aminoacyl-tRNA synthetase family. MetG type 1 subfamily. It depends on Zn(2+) as a cofactor.

The protein resides in the cytoplasm. It carries out the reaction tRNA(Met) + L-methionine + ATP = L-methionyl-tRNA(Met) + AMP + diphosphate. Functionally, is required not only for elongation of protein synthesis but also for the initiation of all mRNA translation through initiator tRNA(fMet) aminoacylation. This is Methionine--tRNA ligase (metG) from Aeropyrum pernix (strain ATCC 700893 / DSM 11879 / JCM 9820 / NBRC 100138 / K1).